A 222-amino-acid polypeptide reads, in one-letter code: TPR repeat-containing protein BH2049 (222 aa).

TPR repeat units follow at residues 34–67 (AEPL…NREH) and 169–202 (PVGL…KEDK).

The chain is TPR repeat-containing protein BH2049 from Halalkalibacterium halodurans (strain ATCC BAA-125 / DSM 18197 / FERM 7344 / JCM 9153 / C-125) (Bacillus halodurans).